The following is a 342-amino-acid chain: Trace amine-associated receptor 3 (342 aa).

Residues Met1–Tyr35 lie on the Extracellular side of the membrane. N-linked (GlcNAc...) asparagine glycosylation is found at Asn18 and Asn25. 2 cysteine pairs are disulfide-bonded: Cys21/Cys185 and Cys104/Cys189. A helical membrane pass occupies residues Leu36–Ile56. Residues Ser57–Phe68 are Cytoplasmic-facing. The chain crosses the membrane as a helical span at residues Leu69–Met89. Residues Val90–Arg150 are Extracellular-facing. Residues Leu151 to Leu168 form a helical membrane-spanning segment. At Ser169–Asn172 the chain is on the cytoplasmic side. The segment at Val173–Phe186 is extracellular Loop 2 (ECL2). The chain crosses the membrane as a helical span at residues Val173 to Phe193. The Extracellular portion of the chain corresponds to Asn194–Gly198. The chain crosses the membrane as a helical span at residues Thr199–Val223. At Ser224–Thr256 the chain is on the cytoplasmic side. The chain crosses the membrane as a helical span at residues Leu257–Ile277. Over Asp278 to Pro286 the chain is Extracellular. A helical membrane pass occupies residues Ile287–Ile307. The Cytoplasmic segment spans residues His308–His342.

The protein belongs to the G-protein coupled receptor 1 family.

The protein resides in the cell membrane. Functionally, olfactory receptor activated by several primary trace amines, including isoamylamine. Activated by isoamylamine and cyclohexylamine, but not to the corresponding alcohols, isoamylalcohol and cyclohexanol. This receptor is probably mediated by the G(s)-class of G-proteins which activate adenylate cyclase. The sequence is that of Trace amine-associated receptor 3 (Taar3) from Rattus norvegicus (Rat).